Here is a 205-residue protein sequence, read N- to C-terminus: Potassium-transporting ATPase KdpC subunit (205 aa).

A helical transmembrane segment spans residues 7–27 (PAIVILVALTIITGLIYPLAM).

The protein belongs to the KdpC family. As to quaternary structure, the system is composed of three essential subunits: KdpA, KdpB and KdpC.

It localises to the cell inner membrane. Functionally, part of the high-affinity ATP-driven potassium transport (or Kdp) system, which catalyzes the hydrolysis of ATP coupled with the electrogenic transport of potassium into the cytoplasm. This subunit acts as a catalytic chaperone that increases the ATP-binding affinity of the ATP-hydrolyzing subunit KdpB by the formation of a transient KdpB/KdpC/ATP ternary complex. The chain is Potassium-transporting ATPase KdpC subunit from Nitrobacter hamburgensis (strain DSM 10229 / NCIMB 13809 / X14).